A 353-amino-acid polypeptide reads, in one-letter code: Nicotinate-nucleotide--dimethylbenzimidazole phosphoribosyltransferase (353 aa).

E319 serves as the catalytic Proton acceptor.

This sequence belongs to the CobT family.

The catalysed reaction is 5,6-dimethylbenzimidazole + nicotinate beta-D-ribonucleotide = alpha-ribazole 5'-phosphate + nicotinate + H(+). Its pathway is nucleoside biosynthesis; alpha-ribazole biosynthesis; alpha-ribazole from 5,6-dimethylbenzimidazole: step 1/2. Catalyzes the synthesis of alpha-ribazole-5'-phosphate from nicotinate mononucleotide (NAMN) and 5,6-dimethylbenzimidazole (DMB). This Syntrophobacter fumaroxidans (strain DSM 10017 / MPOB) protein is Nicotinate-nucleotide--dimethylbenzimidazole phosphoribosyltransferase.